A 119-amino-acid chain; its full sequence is Virulence protein VsdF (119 aa).

Functionally, expressed but non-essential protein, involved in the virulence of Salmonellas. In Salmonella dublin, this protein is Virulence protein VsdF (vsdF).